The chain runs to 437 residues: Amino-acid acetyltransferase (437 aa).

In terms of domain architecture, N-acetyltransferase spans 289–429 (ENIRLATSFD…EHYNYQRMSK (141 aa)).

The protein belongs to the acetyltransferase family. ArgA subfamily.

The protein resides in the cytoplasm. The enzyme catalyses L-glutamate + acetyl-CoA = N-acetyl-L-glutamate + CoA + H(+). It functions in the pathway amino-acid biosynthesis; L-arginine biosynthesis; N(2)-acetyl-L-ornithine from L-glutamate: step 1/4. The sequence is that of Amino-acid acetyltransferase from Actinobacillus pleuropneumoniae serotype 7 (strain AP76).